A 61-amino-acid chain; its full sequence is LKCHNKVVPFLSKTCPEGKNLCYKMTLKKVPKIPIKRGCTDACPKSSLLVNVMCCKTDKCN.

4 disulfides stabilise this stretch: C3/C22, C15/C39, C43/C54, and C55/C60.

The protein belongs to the three-finger toxin family. Short-chain subfamily. Type IB cytotoxin sub-subfamily. In terms of tissue distribution, expressed by the venom gland.

The protein localises to the secreted. This protein lyses red blood cells, has cytotoxic activity and induces hypotension, but is not neurotoxic. In addition, it induces direct paralysis of the muscle fiber. In Hemachatus haemachatus (Rinkhals), this protein is Cytotoxin 2.